A 283-amino-acid polypeptide reads, in one-letter code: Polyamine aminopropyltransferase (283 aa).

Residues 5–238 enclose the PABS domain; sequence PTWIDEYHKG…GIWSWTFASD (234 aa). An S-methyl-5'-thioadenosine-binding site is contributed by Gln32. Spermidine contacts are provided by His63 and Asp87. Residues Glu107 and 139–140 each bind S-methyl-5'-thioadenosine; that span reads DG. The active-site Proton acceptor is the Asp158. A spermidine-binding site is contributed by 158 to 161; the sequence is DCSD.

This sequence belongs to the spermidine/spermine synthase family. In terms of assembly, homodimer or homotetramer.

The protein localises to the cytoplasm. The enzyme catalyses S-adenosyl 3-(methylsulfanyl)propylamine + putrescine = S-methyl-5'-thioadenosine + spermidine + H(+). The protein operates within amine and polyamine biosynthesis; spermidine biosynthesis; spermidine from putrescine: step 1/1. Functionally, catalyzes the irreversible transfer of a propylamine group from the amino donor S-adenosylmethioninamine (decarboxy-AdoMet) to putrescine (1,4-diaminobutane) to yield spermidine. This chain is Polyamine aminopropyltransferase, found in Prochlorococcus marinus subsp. pastoris (strain CCMP1986 / NIES-2087 / MED4).